We begin with the raw amino-acid sequence, 351 residues long: Terpene cyclase sdgD (351 aa).

Transmembrane regions (helical) follow at residues 7–27 (INFIRFTFVILSLLAIYTILI), 62–82 (TGVPVLDIFVKALVTSFWPVI), 89–109 (LSLLGVPAVASMGVSYLLLLL), 126–146 (WVGLLQTNFSQAIILPIYCAI), 160–180 (IPHVTISLILCVYTGMALVAL), 193–213 (VVVAFMVPWALWVFVMVFMAS), 229–249 (IYIFALVIAATTHLGALLASL), 281–301 (FLQWDYLIASVTLFLWAVAVY), and 316–336 (LEVCAISVIISPAAMAVLLIW).

Belongs to the membrane-bound ascI terpene cyclase family.

It localises to the membrane. The protein operates within secondary metabolite biosynthesis. In terms of biological role, epoxide hydrolase; part of the gene cluster that mediates the biosynthesis of the polyenes aspernidgulenes. The carbon backbone of aspernidgulenes is synthesized by the HR-PKS sdgA, which accepts acetyl-CoA as the starter unit and performs malonyl-CoA extensions as well as regioselective methylation and reduction. The resulting nonaketide offloads the HR-PKS by intramolecular lactonization to yield the 5,6-dihydro-alpha-pyrone-containing hexaenoic acids preaspernidgulene A1 and A2. The FAD-dependent monooxygenase sdgC then installs the first epoxide on the penultimate double bond. Subsequently, the FAD-dependent monooxygenase sdgF presumably generates a ketone intermediate through Meinwald rearrangement involving a hydride shift. Next, sdgC introduces another epoxide on the last olefin of the ketone intermediate after E/Z isomerization. The epoxide hydrolase sdgD then catalyzes stereospecific cyclization of the 5,6-dihydro-alpha-pyrone and opening of the epoxide ring to form an oxygenated trimethylcyclopentanone and an oxabicyclo[2.2.1]heptane unit. Finally, the bicyclic unit undergoes hydrolytic cleavage, either spontaneously or catalyzed by sdgD, to assemble the dimethyl-gamma-lactone moiety in aspernidgulene A1. The sequence is that of Terpene cyclase sdgD from Emericella nidulans (strain FGSC A4 / ATCC 38163 / CBS 112.46 / NRRL 194 / M139) (Aspergillus nidulans).